The chain runs to 562 residues: Chaperonin GroEL 1 (562 aa).

Residues 30–33 (TLGP), Lys51, 87–91 (DGTTT), Gly415, 478–480 (NAA), and Asp494 each bind ATP.

Belongs to the chaperonin (HSP60) family. As to quaternary structure, forms a cylinder of 14 subunits composed of two heptameric rings stacked back-to-back. Interacts with the co-chaperonin GroES.

It is found in the cytoplasm. The catalysed reaction is ATP + H2O + a folded polypeptide = ADP + phosphate + an unfolded polypeptide.. In terms of biological role, together with its co-chaperonin GroES, plays an essential role in assisting protein folding. The GroEL-GroES system forms a nano-cage that allows encapsulation of the non-native substrate proteins and provides a physical environment optimized to promote and accelerate protein folding. This chain is Chaperonin GroEL 1, found in Sorangium cellulosum (strain So ce56) (Polyangium cellulosum (strain So ce56)).